An 835-amino-acid polypeptide reads, in one-letter code: Probable RNA-directed RNA polymerase (835 aa).

It belongs to the totiviridae RNA-directed RNA polymerase family.

The catalysed reaction is RNA(n) + a ribonucleoside 5'-triphosphate = RNA(n+1) + diphosphate. Its function is as follows. RNA-dependent RNA polymerase which replicates the viral genome. Catalyzes the transcription of fully conservative plus-strand genomic RNAs that are extruded from the virion into the cytoplasm where they function as mRNAs for translation of viral proteins and also as substrates for encapsidation to form new virions. Once encapsidated, the positive strand is converted to dsRNA by the RNA-directed RNA polymerase. This is Probable RNA-directed RNA polymerase from Helminthosporium victoriae virus-190S (Hv190SV).